The sequence spans 207 residues: 3-demethoxyubiquinol 3-hydroxylase (207 aa).

E56, E86, H89, E138, E170, and H173 together coordinate Fe cation.

The protein belongs to the COQ7 family. Fe cation is required as a cofactor.

The protein resides in the cell membrane. The enzyme catalyses a 5-methoxy-2-methyl-3-(all-trans-polyprenyl)benzene-1,4-diol + AH2 + O2 = a 3-demethylubiquinol + A + H2O. Its pathway is cofactor biosynthesis; ubiquinone biosynthesis. Functionally, catalyzes the hydroxylation of 2-nonaprenyl-3-methyl-6-methoxy-1,4-benzoquinol during ubiquinone biosynthesis. This chain is 3-demethoxyubiquinol 3-hydroxylase, found in Cupriavidus pinatubonensis (strain JMP 134 / LMG 1197) (Cupriavidus necator (strain JMP 134)).